We begin with the raw amino-acid sequence, 96 residues long: Aspartyl/glutamyl-tRNA(Asn/Gln) amidotransferase subunit C (96 aa).

Belongs to the GatC family. As to quaternary structure, heterotrimer of A, B and C subunits.

The enzyme catalyses L-glutamyl-tRNA(Gln) + L-glutamine + ATP + H2O = L-glutaminyl-tRNA(Gln) + L-glutamate + ADP + phosphate + H(+). It carries out the reaction L-aspartyl-tRNA(Asn) + L-glutamine + ATP + H2O = L-asparaginyl-tRNA(Asn) + L-glutamate + ADP + phosphate + 2 H(+). Functionally, allows the formation of correctly charged Asn-tRNA(Asn) or Gln-tRNA(Gln) through the transamidation of misacylated Asp-tRNA(Asn) or Glu-tRNA(Gln) in organisms which lack either or both of asparaginyl-tRNA or glutaminyl-tRNA synthetases. The reaction takes place in the presence of glutamine and ATP through an activated phospho-Asp-tRNA(Asn) or phospho-Glu-tRNA(Gln). The sequence is that of Aspartyl/glutamyl-tRNA(Asn/Gln) amidotransferase subunit C from Exiguobacterium sp. (strain ATCC BAA-1283 / AT1b).